The sequence spans 278 residues: MRADPASAAADIFEANRARGAVRFDLRLQDGVTRRHHLHESGSLRVRFPSPEDDGLSAMFVNTAGGIAGGDRFAIEVAAGEGSRVTLSSAAAEKVYRAPGTPAELAIALRAADSAHISWLPQETILFDRARIHRRMDIDLAETASLLLCEIVVFGRTAMGERMREGEFVDRWRLRRGGKLVFAETVRLDGDIGDKLAQPAIANGATAIGTALIVPGDGALVERIRESLPASRGEAGLSAWNGFAMARFCAQDAASLRADMMAVLGCASAVPLPRLWLN.

The protein belongs to the UreD family. In terms of assembly, ureD, UreF and UreG form a complex that acts as a GTP-hydrolysis-dependent molecular chaperone, activating the urease apoprotein by helping to assemble the nickel containing metallocenter of UreC. The UreE protein probably delivers the nickel.

It localises to the cytoplasm. In terms of biological role, required for maturation of urease via the functional incorporation of the urease nickel metallocenter. In Bradyrhizobium sp. (strain ORS 278), this protein is Urease accessory protein UreD 1.